The chain runs to 196 residues: Bcl-2-like protein 11 (196 aa).

A disordered region spans residues 1-68 (MAKQPSDVNS…PLAPPASPGP (68 aa)). Residues 34–43 (TSLQTESQGN) are compositionally biased toward polar residues. A Phosphoserine; by MAPK modification is found at serine 65. Serine 73, serine 83, and serine 90 each carry phosphoserine. The tract at residues 90 to 114 (SGYFSFDTDRSPAPMSCDKSTQTPS) is disordered. The BH3 motif lies at 146 to 160 (IAQELRRIGDEFNET).

The protein belongs to the Bcl-2 family. In terms of assembly, forms heterodimers with a number of antiapoptotic Bcl-2 proteins, including MCL1, BCL2, BCL2L1 isoform Bcl-X(L), BCL2A1/BFL-1, and BCL2L2/BCLW. Does not heterodimerize with proapoptotic proteins such as BAD, BOK or BAK. Identified in a complex containing BCL2L11, DYNLL1 and BCL2L1 isoform Bcl-X(L); BH3 integrity is required for BCL2L1-binding. Interacts with YWHAZ. When phosphorylated, interacts with TRIM2; this interaction is associated with ubiquitination and degradation. Interacts (via BH3) with MCL1; this interaction may sequester BCL2L11 and prevent its pro-apoptotic activity. When phosphorylated, isoform BimEL interacts with USP27X; this interaction leads to BCL2L11 deubiquitination and stabilization. Interacts with GIMAP5. Interacts with BCL2L10/BCL-B. In terms of processing, phosphorylation at Ser-65 by MAPK1/MAPK3 leads interaction with TRIM2 and ubiquitination, followed by proteasomal degradation. Deubiquitination catalyzed by USP27X stabilizes the protein. Ubiquitination by TRIM2 following phosphorylation by MAPK1/MAPK3 leads to proteasomal degradation. Conversely, deubiquitination catalyzed by USP27X stabilizes the protein. Widely expressed.

The protein resides in the membrane. The protein localises to the mitochondrion. Induces apoptosis and anoikis. This Rattus norvegicus (Rat) protein is Bcl-2-like protein 11 (Bcl2l11).